Here is a 103-residue protein sequence, read N- to C-terminus: Large ribosomal subunit protein bL21 (103 aa).

This sequence belongs to the bacterial ribosomal protein bL21 family. Part of the 50S ribosomal subunit. Contacts protein L20.

Functionally, this protein binds to 23S rRNA in the presence of protein L20. The chain is Large ribosomal subunit protein bL21 from Acidithiobacillus ferrooxidans (strain ATCC 23270 / DSM 14882 / CIP 104768 / NCIMB 8455) (Ferrobacillus ferrooxidans (strain ATCC 23270)).